An 855-amino-acid polypeptide reads, in one-letter code: DNA mismatch repair protein MutS (855 aa).

616–623 is a binding site for ATP; that stretch reads GPNMGGKS.

It belongs to the DNA mismatch repair MutS family.

In terms of biological role, this protein is involved in the repair of mismatches in DNA. It is possible that it carries out the mismatch recognition step. This protein has a weak ATPase activity. This is DNA mismatch repair protein MutS from Salmonella paratyphi C (strain RKS4594).